Consider the following 959-residue polypeptide: Isoleucine--tRNA ligase (959 aa).

The 'HIGH' region signature appears at 60-70 (PYANGSLHMGH). E569 contributes to the L-isoleucyl-5'-AMP binding site. The short motif at 610–614 (KMSKS) is the 'KMSKS' region element. K613 lines the ATP pocket. The Zn(2+) site is built by C928, C931, C948, and C951.

This sequence belongs to the class-I aminoacyl-tRNA synthetase family. IleS type 1 subfamily. In terms of assembly, monomer. Zn(2+) serves as cofactor.

It localises to the cytoplasm. It carries out the reaction tRNA(Ile) + L-isoleucine + ATP = L-isoleucyl-tRNA(Ile) + AMP + diphosphate. Its function is as follows. Catalyzes the attachment of isoleucine to tRNA(Ile). As IleRS can inadvertently accommodate and process structurally similar amino acids such as valine, to avoid such errors it has two additional distinct tRNA(Ile)-dependent editing activities. One activity is designated as 'pretransfer' editing and involves the hydrolysis of activated Val-AMP. The other activity is designated 'posttransfer' editing and involves deacylation of mischarged Val-tRNA(Ile). This chain is Isoleucine--tRNA ligase, found in Gloeothece citriformis (strain PCC 7424) (Cyanothece sp. (strain PCC 7424)).